The primary structure comprises 430 residues: Enolase (430 aa).

Residue Gln-165 participates in (2R)-2-phosphoglycerate binding. Glu-207 serves as the catalytic Proton donor. Positions 244, 287, and 314 each coordinate Mg(2+). (2R)-2-phosphoglycerate is bound by residues Lys-339, Arg-368, Ser-369, and Lys-390. Lys-339 (proton acceptor) is an active-site residue.

The protein belongs to the enolase family. Component of the RNA degradosome, a multiprotein complex involved in RNA processing and mRNA degradation. The cofactor is Mg(2+).

The protein localises to the cytoplasm. The protein resides in the secreted. Its subcellular location is the cell surface. The catalysed reaction is (2R)-2-phosphoglycerate = phosphoenolpyruvate + H2O. It functions in the pathway carbohydrate degradation; glycolysis; pyruvate from D-glyceraldehyde 3-phosphate: step 4/5. In terms of biological role, catalyzes the reversible conversion of 2-phosphoglycerate (2-PG) into phosphoenolpyruvate (PEP). It is essential for the degradation of carbohydrates via glycolysis. The chain is Enolase from Xylella fastidiosa (strain 9a5c).